Reading from the N-terminus, the 379-residue chain is Phospho-N-acetylmuramoyl-pentapeptide-transferase (379 aa).

The next 10 membrane-spanning stretches (helical) occupy residues 27–47 (FRTA…GPAV), 76–96 (TMGG…WADL), 100–120 (FVWI…TDDY), 135–155 (AKMG…VLVQ), 185–205 (PHIW…VLVG), 218–238 (GLAI…TYVS), 255–275 (VGEL…FLWY), 283–303 (FMGD…AVII), 307–327 (LLLP…ILQV), and 356–376 (KIIV…LTTL).

This sequence belongs to the glycosyltransferase 4 family. MraY subfamily. Mg(2+) serves as cofactor.

Its subcellular location is the cell inner membrane. The enzyme catalyses UDP-N-acetyl-alpha-D-muramoyl-L-alanyl-gamma-D-glutamyl-meso-2,6-diaminopimeloyl-D-alanyl-D-alanine + di-trans,octa-cis-undecaprenyl phosphate = di-trans,octa-cis-undecaprenyl diphospho-N-acetyl-alpha-D-muramoyl-L-alanyl-D-glutamyl-meso-2,6-diaminopimeloyl-D-alanyl-D-alanine + UMP. The protein operates within cell wall biogenesis; peptidoglycan biosynthesis. In terms of biological role, catalyzes the initial step of the lipid cycle reactions in the biosynthesis of the cell wall peptidoglycan: transfers peptidoglycan precursor phospho-MurNAc-pentapeptide from UDP-MurNAc-pentapeptide onto the lipid carrier undecaprenyl phosphate, yielding undecaprenyl-pyrophosphoryl-MurNAc-pentapeptide, known as lipid I. This chain is Phospho-N-acetylmuramoyl-pentapeptide-transferase, found in Koribacter versatilis (strain Ellin345).